Consider the following 354-residue polypeptide: Probable protein phosphatase 2C 27 (354 aa).

The region spanning 54-319 (RSGDWSDIGG…DNLTAVMVSF (266 aa)) is the PPM-type phosphatase domain. 4 residues coordinate Mn(2+): aspartate 98, glycine 99, aspartate 267, and aspartate 310.

This sequence belongs to the PP2C family. Mg(2+) serves as cofactor. Requires Mn(2+) as cofactor.

The catalysed reaction is O-phospho-L-seryl-[protein] + H2O = L-seryl-[protein] + phosphate. The enzyme catalyses O-phospho-L-threonyl-[protein] + H2O = L-threonyl-[protein] + phosphate. The sequence is that of Probable protein phosphatase 2C 27 from Oryza sativa subsp. japonica (Rice).